Reading from the N-terminus, the 493-residue chain is Endothelial lipase (493 aa).

Residues 1–23 form the signal peptide; the sequence is MRDPVFLLGFWSLYCCFPAGSLT. A disulfide bridge connects residues Cys-66 and Cys-79. N-linked (GlcNAc...) asparagine glycosylation is found at Asn-67 and Asn-82. Ser-171 functions as the Nucleophile in the catalytic mechanism. The active-site Charge relay system is the Asp-195. Cys-254 and Cys-274 are oxidised to a cystine. His-276 serves as the catalytic Charge relay system. 2 disulfide bridges follow: Cys-299–Cys-318 and Cys-310–Cys-313. Residue 327-339 participates in heparin binding; that stretch reads KMRKKRNSKMYLK. The 136-residue stretch at 349–484 folds into the PLAT domain; that stretch reads YHYQLKVHMF…SPGQELWFYK (136 aa). Asn-395 carries N-linked (GlcNAc...) asparagine glycosylation. An intrachain disulfide couples Cys-465 to Cys-485.

The protein belongs to the AB hydrolase superfamily. Lipase family. As to quaternary structure, head to tail Homodimer. Interacts with apolipoprotein C-2.

The protein resides in the secreted. It catalyses the reaction a triacylglycerol + H2O = a diacylglycerol + a fatty acid + H(+). The enzyme catalyses a 1,2-diacyl-sn-glycero-3-phosphocholine + H2O = a 2-acyl-sn-glycero-3-phosphocholine + a fatty acid + H(+). The catalysed reaction is 1,2,3-tri-(9Z-octadecenoyl)-glycerol + H2O = di-(9Z)-octadecenoylglycerol + (9Z)-octadecenoate + H(+). It carries out the reaction 1,2,3-tributanoylglycerol + H2O = dibutanoylglycerol + butanoate + H(+). It catalyses the reaction 1,2-dihexadecanoyl-sn-glycero-3-phosphocholine + H2O = hexadecanoyl-sn-glycero-3-phosphocholine + hexadecanoate + H(+). Its function is as follows. Exerts both phospholipase and triglyceride lipase activities. More active as a phospholipase than a triglyceride lipase. Hydrolyzes triglycerides, both with short-chain fatty acyl groups (tributyrin) and long-chain fatty acyl groups (triolein) with similar levels of activity toward both types of substrates. Hydrolyzes high density lipoproteins (HDL) more efficiently than other lipoproteins. This is Endothelial lipase (Lipg) from Rattus norvegicus (Rat).